A 207-amino-acid chain; its full sequence is Ribosomal RNA large subunit methyltransferase E (207 aa).

S-adenosyl-L-methionine is bound by residues Gly60, Trp62, Asp80, Asp96, and Asp121. Residue Lys161 is the Proton acceptor of the active site.

The protein belongs to the class I-like SAM-binding methyltransferase superfamily. RNA methyltransferase RlmE family.

It localises to the cytoplasm. It catalyses the reaction uridine(2552) in 23S rRNA + S-adenosyl-L-methionine = 2'-O-methyluridine(2552) in 23S rRNA + S-adenosyl-L-homocysteine + H(+). Specifically methylates the uridine in position 2552 of 23S rRNA at the 2'-O position of the ribose in the fully assembled 50S ribosomal subunit. This is Ribosomal RNA large subunit methyltransferase E from Thioalkalivibrio sulfidiphilus (strain HL-EbGR7).